A 354-amino-acid chain; its full sequence is NADH-quinone oxidoreductase subunit H (354 aa).

Helical transmembrane passes span 16–36 (WLAV…PVMI), 90–110 (YLFI…WAVI), 126–146 (VLYV…SGWA), 170–190 (MGFA…TGIV), 197–217 (IWNW…ISGL), 249–269 (VFFL…AIMF), 290–310 (VPGF…FLWF), and 329–349 (VLIP…YFKV).

The protein belongs to the complex I subunit 1 family. In terms of assembly, NDH-1 is composed of 14 different subunits. Subunits NuoA, H, J, K, L, M, N constitute the membrane sector of the complex.

The protein resides in the cell inner membrane. It catalyses the reaction a quinone + NADH + 5 H(+)(in) = a quinol + NAD(+) + 4 H(+)(out). NDH-1 shuttles electrons from NADH, via FMN and iron-sulfur (Fe-S) centers, to quinones in the respiratory chain. The immediate electron acceptor for the enzyme in this species is believed to be ubiquinone. Couples the redox reaction to proton translocation (for every two electrons transferred, four hydrogen ions are translocated across the cytoplasmic membrane), and thus conserves the redox energy in a proton gradient. This subunit may bind ubiquinone. The polypeptide is NADH-quinone oxidoreductase subunit H (Hydrogenovibrio crunogenus (strain DSM 25203 / XCL-2) (Thiomicrospira crunogena)).